A 418-amino-acid polypeptide reads, in one-letter code: Actin-related protein 3 (418 aa).

This sequence belongs to the actin family. ARP3 subfamily. Component of the Arp2/3 complex composed of actr2/arp2, actr3/arp3, arpc1b, arpc2, arpc3, arpc4 and arpc5.

Its subcellular location is the cytoplasm. It localises to the cytoskeleton. The protein localises to the cell projection. It is found in the nucleus. ATP-binding component of the Arp2/3 complex, a multiprotein complex that mediates actin polymerization upon stimulation by nucleation-promoting factor (NPF). The Arp2/3 complex mediates the formation of branched actin networks in the cytoplasm, providing the force for cell motility. Seems to contact the pointed end of the daughter actin filament. In addition to its role in the cytoplasmic cytoskeleton, the Arp2/3 complex also promotes actin polymerization in the nucleus, thereby regulating gene transcription and repair of damaged DNA. The Arp2/3 complex promotes homologous recombination (HR) repair in response to DNA damage by promoting nuclear actin polymerization, leading to drive motility of double-strand breaks (DSBs). This Takifugu rubripes (Japanese pufferfish) protein is Actin-related protein 3 (actr3).